A 319-amino-acid polypeptide reads, in one-letter code: Ribonucleoside-diphosphate reductase small chain (319 aa).

Positions 70, 101, and 104 each coordinate Fe cation. The active site involves Tyr108. Glu163, Glu197, and His200 together coordinate Fe cation. The interaction with R1 stretch occupies residues 313–319; it reads FSLDVDF.

The protein belongs to the ribonucleoside diphosphate reductase small chain family. Interacts with RNR1/OPG080 subunit. Can interact with host RNR1 supunit. Fe cation is required as a cofactor.

The enzyme catalyses a 2'-deoxyribonucleoside 5'-diphosphate + [thioredoxin]-disulfide + H2O = a ribonucleoside 5'-diphosphate + [thioredoxin]-dithiol. Ribonucleoside-diphosphate reductase holoenzyme provides the precursors necessary for viral DNA synthesis. Allows virus growth in non-dividing cells. Catalyzes the biosynthesis of deoxyribonucleotides from the corresponding ribonucleotides. In Vaccinia virus (strain Copenhagen) (VACV), this protein is Ribonucleoside-diphosphate reductase small chain (OPG048).